The chain runs to 574 residues: Glutamyl-tRNA(Gln) amidotransferase subunit B, mitochondrial (574 aa).

A mitochondrion-targeting transit peptide spans 1-12 (MIRQFVSHRGIP). Residues 34–62 (PLGRKNWSTSDEAKSKRAAMRKGGAPPPE) form a disordered region.

This sequence belongs to the GatB/GatE family. GatB subfamily. Subunit of the heterotrimeric GatCAB amidotransferase (AdT) complex, composed of A, B and C subunits.

It localises to the mitochondrion. The enzyme catalyses L-glutamyl-tRNA(Gln) + L-glutamine + ATP + H2O = L-glutaminyl-tRNA(Gln) + L-glutamate + ADP + phosphate + H(+). Functionally, allows the formation of correctly charged Gln-tRNA(Gln) through the transamidation of misacylated Glu-tRNA(Gln) in the mitochondria. The reaction takes place in the presence of glutamine and ATP through an activated gamma-phospho-Glu-tRNA(Gln). The chain is Glutamyl-tRNA(Gln) amidotransferase subunit B, mitochondrial from Ajellomyces capsulatus (strain H143) (Darling's disease fungus).